The chain runs to 696 residues: DNA-directed RNA polymerase subunit beta' (696 aa).

Zn(2+)-binding residues include Cys76, Cys78, Cys94, and Cys97. Mg(2+) is bound by residues Asp496, Asp498, and Asp500.

It belongs to the RNA polymerase beta' chain family. RpoC1 subfamily. As to quaternary structure, in plastids the minimal PEP RNA polymerase catalytic core is composed of four subunits: alpha, beta, beta', and beta''. When a (nuclear-encoded) sigma factor is associated with the core the holoenzyme is formed, which can initiate transcription. Requires Mg(2+) as cofactor. The cofactor is Zn(2+).

It localises to the plastid. Its subcellular location is the chloroplast. It carries out the reaction RNA(n) + a ribonucleoside 5'-triphosphate = RNA(n+1) + diphosphate. DNA-dependent RNA polymerase catalyzes the transcription of DNA into RNA using the four ribonucleoside triphosphates as substrates. This chain is DNA-directed RNA polymerase subunit beta', found in Guizotia abyssinica (Niger).